Reading from the N-terminus, the 293-residue chain is N(1)-aminopropylagmatine ureohydrolase (293 aa).

Positions 105, 128, 130, 132, 210, and 212 each coordinate Mn(2+).

This sequence belongs to the arginase family. Mn(2+) is required as a cofactor.

The catalysed reaction is N(1)-(3-aminopropyl)agmatine + H2O = urea + spermidine. It functions in the pathway amine and polyamine biosynthesis; spermidine biosynthesis. Functionally, involved in the biosynthesis of polyamines which are thought to support the growth of thermophilic microorganisms under high-temperature conditions. It seems that long-chain and branched-chain of polyamines effectively stabilize DNA and RNA, respectively. Catalyzes the decarboxylation of N1-(3-aminopropyl)agmatine to yield spermidine and urea. Does not act on agmatine. The chain is N(1)-aminopropylagmatine ureohydrolase from Thermus thermophilus (strain ATCC BAA-163 / DSM 7039 / HB27).